Here is a 73-residue protein sequence, read N- to C-terminus: Conotoxin Cl9.2 (73 aa).

The N-terminal stretch at 1-18 (MSKLVILAVLVLLPLVTA) is a signal peptide. The propeptide occupies 19-41 (EHGRDEQAMQPEKKTMWTLWSLT). Intrachain disulfides connect Cys46–Cys61, Cys52–Cys63, and Cys58–Cys72.

As to expression, expressed by the venom duct.

Its subcellular location is the secreted. The chain is Conotoxin Cl9.2 from Californiconus californicus (California cone).